A 510-amino-acid chain; its full sequence is Pentatricopeptide repeat-containing protein At1g71060, mitochondrial (510 aa).

The transit peptide at 1–14 (MVFSRFFRVTGVNL) directs the protein to the mitochondrion. 10 PPR repeats span residues 127 to 157 (TTSN…MKAK), 161 to 195 (SKET…GFKM), 196 to 230 (ESSD…RFEP), 231 to 265 (DIKS…GFEP), 266 to 300 (DVVA…NCKP), 301 to 335 (SPHI…GFPL), 336 to 370 (EAPT…GVGP), 371 to 401 (NART…MSCE), 403 to 437 (TVST…GVLP), and 438 to 472 (GMHM…GIRP).

The protein belongs to the PPR family. P subfamily.

The protein localises to the mitochondrion. This chain is Pentatricopeptide repeat-containing protein At1g71060, mitochondrial, found in Arabidopsis thaliana (Mouse-ear cress).